Reading from the N-terminus, the 559-residue chain is 2-isopropylmalate synthase (559 aa).

Positions P33–D307 constitute a Pyruvate carboxyltransferase domain. Mg(2+) is bound by residues D42, H246, H248, and N282. Positions A439–A559 are regulatory domain.

This sequence belongs to the alpha-IPM synthase/homocitrate synthase family. LeuA type 2 subfamily. As to quaternary structure, homodimer. The cofactor is Mg(2+).

It is found in the cytoplasm. It catalyses the reaction 3-methyl-2-oxobutanoate + acetyl-CoA + H2O = (2S)-2-isopropylmalate + CoA + H(+). It participates in amino-acid biosynthesis; L-leucine biosynthesis; L-leucine from 3-methyl-2-oxobutanoate: step 1/4. Its function is as follows. Catalyzes the condensation of the acetyl group of acetyl-CoA with 3-methyl-2-oxobutanoate (2-ketoisovalerate) to form 3-carboxy-3-hydroxy-4-methylpentanoate (2-isopropylmalate). In Pseudomonas fluorescens (strain ATCC BAA-477 / NRRL B-23932 / Pf-5), this protein is 2-isopropylmalate synthase.